Here is a 263-residue protein sequence, read N- to C-terminus: Caveolae-associated protein 3 (263 aa).

The interaction with CAVIN1 stretch occupies residues 1 to 84 (MGESALEPGP…SNTLAQLLAK (84 aa)). The segment at 20–78 (VHAVTVVTLLEKLATMLEALRERQGGLAERQGGLAGSVRRIQSGLGALSRSHDTTSNTL) is leucine-zipper. Phosphoserine is present on residues S62 and S70. A Glycyl lysine isopeptide (Lys-Gly) (interchain with G-Cter in SUMO2) cross-link involves residue K128. The interaction with CAV1 stretch occupies residues 135 to 203 (ARAFQKAPEL…SSRKGSEAAQ (69 aa)). The tract at residues 141-263 (APELLGPEDQ…RPVLQIESAA (123 aa)) is disordered. Over residues 157 to 170 (QPEDEVGESSDEEP) the composition is skewed to acidic residues. 4 positions are modified to phosphoserine: S165, S166, S173, and S199. Positions 219 to 234 (EGPAEGQPAAQPAMEP) are enriched in low complexity.

This sequence belongs to the CAVIN family. As to quaternary structure, component of the CAVIN complex composed of CAVIN1, CAVIN2, CAVIN3 and CAVIN4. Interacts with PRKCD and with phosphatidylserine. Phosphatidylserine may form a bridge between PKC and PKC-binding partners and stabilize the binding. Interacts with PER2. Interacts with CAVIN1 and EPS15L1. Interacts (via leucine-zipper domain) with CAV1 in a cholesterol-sensitive manner. Post-translationally, in vitro, phosphorylated by PRKCD.

The protein resides in the cytoplasm. It is found in the membrane. Its subcellular location is the caveola. It localises to the cytosol. Functionally, regulates the traffic and/or budding of caveolae. Plays a role in caveola formation in a tissue-specific manner. Required for the formation of caveolae in smooth muscle but not in the lung and heart endothelial cells. Regulates the equilibrium between cell surface-associated and cell surface-dissociated caveolae by promoting the rapid release of caveolae from the cell surface. Plays a role in the regulation of the circadian clock. Modulates the period length and phase of circadian gene expression and also regulates expression and interaction of the core clock components PER1/2 and CRY1/2. Seems to have an immune potentiation function, especially in the glioma. This Rattus norvegicus (Rat) protein is Caveolae-associated protein 3.